The primary structure comprises 77 residues: MSCCGGSCGCGSACKCGNGCGGCKRYPDLENTATETLVLGVAPAMNSQYEASGETFVAENDACKCGSDCKCNPCTCK.

This sequence belongs to the metallothionein superfamily. Type 15 family. Expressed in vascular tissues of all organs. Expressed in root and leaf phloem, pollen and root hairs.

Metallothioneins have a high content of cysteine residues that bind various heavy metals. Functions as a metal chelator of copper (Cu) and zinc (Zn). Functions cooperatively with the phytochelatin synthase PCS1 to protect plants from Cu and cadmium toxicity. Plays a role in Cu homeostasis, specifically in the remobilization of Cu from senescing leaves. The mobilization of Cu from internal sources is important for seed development. The chain is Metallothionein-like protein 2B (MT2B) from Arabidopsis thaliana (Mouse-ear cress).